The following is a 345-amino-acid chain: Phosphoribosylformylglycinamidine cyclo-ligase (345 aa).

It belongs to the AIR synthase family.

It is found in the cytoplasm. It carries out the reaction 2-formamido-N(1)-(5-O-phospho-beta-D-ribosyl)acetamidine + ATP = 5-amino-1-(5-phospho-beta-D-ribosyl)imidazole + ADP + phosphate + H(+). It functions in the pathway purine metabolism; IMP biosynthesis via de novo pathway; 5-amino-1-(5-phospho-D-ribosyl)imidazole from N(2)-formyl-N(1)-(5-phospho-D-ribosyl)glycinamide: step 2/2. In Bifidobacterium longum (strain DJO10A), this protein is Phosphoribosylformylglycinamidine cyclo-ligase.